The sequence spans 302 residues: Sulfate adenylyltransferase subunit 2 (302 aa).

The protein belongs to the PAPS reductase family. CysD subfamily. Heterodimer composed of CysD, the smaller subunit, and CysN.

The enzyme catalyses sulfate + ATP + H(+) = adenosine 5'-phosphosulfate + diphosphate. It participates in sulfur metabolism; hydrogen sulfide biosynthesis; sulfite from sulfate: step 1/3. Its function is as follows. With CysN forms the ATP sulfurylase (ATPS) that catalyzes the adenylation of sulfate producing adenosine 5'-phosphosulfate (APS) and diphosphate, the first enzymatic step in sulfur assimilation pathway. APS synthesis involves the formation of a high-energy phosphoric-sulfuric acid anhydride bond driven by GTP hydrolysis by CysN coupled to ATP hydrolysis by CysD. The chain is Sulfate adenylyltransferase subunit 2 from Shigella dysenteriae serotype 1 (strain Sd197).